Consider the following 181-residue polypeptide: Ribosome maturation factor RimM (181 aa).

The region spanning 99–172 (EDEFYQVDLI…FLIVDPMAAG (74 aa)) is the PRC barrel domain.

Belongs to the RimM family. As to quaternary structure, binds ribosomal protein uS19.

It is found in the cytoplasm. In terms of biological role, an accessory protein needed during the final step in the assembly of 30S ribosomal subunit, possibly for assembly of the head region. Essential for efficient processing of 16S rRNA. May be needed both before and after RbfA during the maturation of 16S rRNA. It has affinity for free ribosomal 30S subunits but not for 70S ribosomes. This Bartonella tribocorum (strain CIP 105476 / IBS 506) protein is Ribosome maturation factor RimM.